Reading from the N-terminus, the 466-residue chain is MFIPSIYLHQQLHYCKTAILNWSRKMALSRQKFTFERLRRFTLPEGKKQTFLWDADVTTLACRATSGAKAFVFQSVYAGKTLRMTIGNINDWKIDDARAEARRLQTLIDTGIDPRIAKAVKIAEAESLQAESRKTKVTFSVAWEDYLQELRTGISAKTKRPYSTRYIADHINLSSRGGESKKRGQGPTSAGPLASLLNLPLSELTPDYIAAWLSTERQNRPTVTAHAYRLLRAFIKWSNYQKKYQGIIPGDLAQDYNVRKMVPVSASKADDCLQKEQLKSWFSAVRSLNNPIASAYLQVLLLTGARREEIASLRWSDVDFKWSSMRIKDKIEGERIIPLTPYVSELLNVLAQSPNSDVNKEGWVFRSNSKSGKIIEPRSAHNRALVLAELPHISLHGLRRSFGTLAEWVEVPTGIVAQIMGHKPSALAEKHYRRRPLDLLRKWHEKIETWILNEAGITIKNNVDMR.

The 106-residue stretch at 134 to 239 (KTKVTFSVAW…LLRAFIKWSN (106 aa)) folds into the Core-binding (CB) domain. Positions 268–445 (KADDCLQKEQ…PLDLLRKWHE (178 aa)) constitute a Tyr recombinase domain. Catalysis depends on residues arginine 306, lysine 328, histidine 396, arginine 399, and histidine 422. Tyrosine 432 functions as the O-(3'-phospho-DNA)-tyrosine intermediate in the catalytic mechanism.

Belongs to the 'phage' integrase family.

Integrase is necessary for integration of the phage into the host genome by site-specific recombination. In conjunction with excisionase, integrase is also necessary for excision of the prophage from the host genome. In Escherichia coli (strain K12), this protein is Prophage integrase IntF (intF).